Here is a 190-residue protein sequence, read N- to C-terminus: Jupiter microtubule associated homolog 2 (190 aa).

An N-acetylmethionine modification is found at Met-1. Residues 1–15 (MFQGADSQAGKSGSR) are compositionally biased toward polar residues. The segment at 1-190 (MFQGADSQAG…PGGKSSLSFY (190 aa)) is disordered. Lys-11 carries the post-translational modification N6-acetyllysine. At Ser-30 the chain carries Phosphoserine. Residues 35–44 (ISSSKPNRMA) are compositionally biased toward polar residues. Phosphoserine occurs at positions 45, 69, and 97. Composition is skewed to basic and acidic residues over residues 110–129 (KPKDHVLLCEGEDSKSDLKA) and 138–153 (EQSDKGSSKEVEHAKI). Ser-144 is subject to Phosphoserine.

Belongs to the JUPITER family. As to quaternary structure, monomer. Dimer. Interacts with TPCN1.

The protein resides in the cytoplasm. It is found in the nucleus. Its function is as follows. Nicotinic acid adenine dinucleotide phosphate (NAADP) binding protein required for NAADP-evoked intracellular calcium release. Confers NAADP-sensitivity to the two pore channels (TPCs) complex. Enables NAADP to activate Ca(2+) release from the endoplasmic reticulum through ryanodine receptors. In Mus musculus (Mouse), this protein is Jupiter microtubule associated homolog 2.